Reading from the N-terminus, the 379-residue chain is Alcohol dehydrogenase 2 (379 aa).

Cys-47, Thr-49, His-69, Cys-99, Cys-102, Cys-105, Cys-113, and Cys-177 together coordinate Zn(2+). An alcohol is bound by residues Thr-49 and His-69. Position 49 (Thr-49) interacts with NAD(+). Residues 202–207, Asp-226, Lys-231, Thr-272, Val-295, 295–297, Phe-322, and Arg-372 contribute to the NAD(+) site; these read GLGAVG and VGV.

This sequence belongs to the zinc-containing alcohol dehydrogenase family. In terms of assembly, homodimer. Zn(2+) serves as cofactor.

The protein localises to the cytoplasm. It catalyses the reaction a primary alcohol + NAD(+) = an aldehyde + NADH + H(+). The enzyme catalyses a secondary alcohol + NAD(+) = a ketone + NADH + H(+). The sequence is that of Alcohol dehydrogenase 2 (ADH2) from Zea mays (Maize).